The primary structure comprises 290 residues: Acetyl-coenzyme A carboxylase carboxyl transferase subunit beta (290 aa).

A CoA carboxyltransferase N-terminal domain is found at 27–290 (LWHKCPSCEA…FTHSPSPVSA (264 aa)). Positions 31, 34, 50, and 53 each coordinate Zn(2+). Residues 31-53 (CPSCEAVLYRPELEKTLDVCPKC) form a C4-type zinc finger.

The protein belongs to the AccD/PCCB family. As to quaternary structure, acetyl-CoA carboxylase is a heterohexamer composed of biotin carboxyl carrier protein (AccB), biotin carboxylase (AccC) and two subunits each of ACCase subunit alpha (AccA) and ACCase subunit beta (AccD). Zn(2+) is required as a cofactor.

The protein localises to the cytoplasm. The catalysed reaction is N(6)-carboxybiotinyl-L-lysyl-[protein] + acetyl-CoA = N(6)-biotinyl-L-lysyl-[protein] + malonyl-CoA. The protein operates within lipid metabolism; malonyl-CoA biosynthesis; malonyl-CoA from acetyl-CoA: step 1/1. Functionally, component of the acetyl coenzyme A carboxylase (ACC) complex. Biotin carboxylase (BC) catalyzes the carboxylation of biotin on its carrier protein (BCCP) and then the CO(2) group is transferred by the transcarboxylase to acetyl-CoA to form malonyl-CoA. The sequence is that of Acetyl-coenzyme A carboxylase carboxyl transferase subunit beta from Pseudomonas aeruginosa (strain UCBPP-PA14).